Consider the following 121-residue polypeptide: Small ribosomal subunit protein uS13 (121 aa).

The disordered stretch occupies residues His91–Lys121.

It belongs to the universal ribosomal protein uS13 family. In terms of assembly, part of the 30S ribosomal subunit. Forms a loose heterodimer with protein S19. Forms two bridges to the 50S subunit in the 70S ribosome.

Located at the top of the head of the 30S subunit, it contacts several helices of the 16S rRNA. In the 70S ribosome it contacts the 23S rRNA (bridge B1a) and protein L5 of the 50S subunit (bridge B1b), connecting the 2 subunits; these bridges are implicated in subunit movement. Contacts the tRNAs in the A and P-sites. The sequence is that of Small ribosomal subunit protein uS13 from Bordetella avium (strain 197N).